We begin with the raw amino-acid sequence, 114 residues long: Large ribosomal subunit protein uL22 (114 aa).

Belongs to the universal ribosomal protein uL22 family. Part of the 50S ribosomal subunit.

Its function is as follows. This protein binds specifically to 23S rRNA; its binding is stimulated by other ribosomal proteins, e.g. L4, L17, and L20. It is important during the early stages of 50S assembly. It makes multiple contacts with different domains of the 23S rRNA in the assembled 50S subunit and ribosome. Functionally, the globular domain of the protein is located near the polypeptide exit tunnel on the outside of the subunit, while an extended beta-hairpin is found that lines the wall of the exit tunnel in the center of the 70S ribosome. The polypeptide is Large ribosomal subunit protein uL22 (Streptococcus mutans serotype c (strain ATCC 700610 / UA159)).